Reading from the N-terminus, the 78-residue chain is Acyl carrier protein (78 aa).

A Carrier domain is found at 2 to 77 (STIEERVKKI…AAIDYVNSHQ (76 aa)). Ser37 carries the post-translational modification O-(pantetheine 4'-phosphoryl)serine.

The protein belongs to the acyl carrier protein (ACP) family. Post-translationally, 4'-phosphopantetheine is transferred from CoA to a specific serine of apo-ACP by AcpS. This modification is essential for activity because fatty acids are bound in thioester linkage to the sulfhydryl of the prosthetic group.

The protein localises to the cytoplasm. It functions in the pathway lipid metabolism; fatty acid biosynthesis. Carrier of the growing fatty acid chain in fatty acid biosynthesis. This is Acyl carrier protein from Pseudomonas putida (strain W619).